Here is a 417-residue protein sequence, read N- to C-terminus: NADH-quinone oxidoreductase subunit D (417 aa).

The protein belongs to the complex I 49 kDa subunit family. NDH-1 is composed of 14 different subunits. Subunits NuoB, C, D, E, F, and G constitute the peripheral sector of the complex.

Its subcellular location is the cell inner membrane. It carries out the reaction a quinone + NADH + 5 H(+)(in) = a quinol + NAD(+) + 4 H(+)(out). NDH-1 shuttles electrons from NADH, via FMN and iron-sulfur (Fe-S) centers, to quinones in the respiratory chain. The immediate electron acceptor for the enzyme in this species is believed to be ubiquinone. Couples the redox reaction to proton translocation (for every two electrons transferred, four hydrogen ions are translocated across the cytoplasmic membrane), and thus conserves the redox energy in a proton gradient. The polypeptide is NADH-quinone oxidoreductase subunit D (Francisella philomiragia subsp. philomiragia (strain ATCC 25017 / CCUG 19701 / FSC 153 / O#319-036)).